The chain runs to 747 residues: Ion-translocating oxidoreductase complex subunit C (747 aa).

2 4Fe-4S ferredoxin-type domains span residues 368–397 (MEPV…QQLY) and 407–436 (KARN…VQYY). The [4Fe-4S] cluster site is built by cysteine 377, cysteine 380, cysteine 383, cysteine 387, cysteine 416, cysteine 419, cysteine 422, and cysteine 426. The interval 538–564 (VREERARENQTQQETPTVDVPSTELDD) is disordered.

This sequence belongs to the 4Fe4S bacterial-type ferredoxin family. RnfC subfamily. In terms of assembly, the complex is composed of six subunits: RnfA, RnfB, RnfC, RnfD, RnfE and RnfG. It depends on [4Fe-4S] cluster as a cofactor.

The protein resides in the cell inner membrane. In terms of biological role, part of a membrane-bound complex that couples electron transfer with translocation of ions across the membrane. In Pectobacterium carotovorum subsp. carotovorum (strain PC1), this protein is Ion-translocating oxidoreductase complex subunit C.